The sequence spans 739 residues: Catalase-peroxidase 2 (739 aa).

The N-terminal stretch at 1–26 (MKKTTIPTLSALTLAMSLAFGGAAIA) is a signal peptide. Positions 105 to 227 (WHSAGVYRIF…MGATQMGLIY (123 aa)) form a cross-link, tryptophyl-tyrosyl-methioninium (Trp-Tyr) (with M-253). The Proton acceptor role is filled by His106. The tryptophyl-tyrosyl-methioninium (Tyr-Met) (with W-105) cross-link spans 227–253 (YVNPEGPNGVPDPLASAKEIRDTFGRM). Residue His268 participates in heme b binding.

The protein belongs to the peroxidase family. Peroxidase/catalase subfamily. As to quaternary structure, homodimer or homotetramer. The cofactor is heme b. In terms of processing, formation of the three residue Trp-Tyr-Met cross-link is important for the catalase, but not the peroxidase activity of the enzyme.

The enzyme catalyses H2O2 + AH2 = A + 2 H2O. It catalyses the reaction 2 H2O2 = O2 + 2 H2O. In terms of biological role, bifunctional enzyme with both catalase and broad-spectrum peroxidase activity. This chain is Catalase-peroxidase 2, found in Shewanella sp. (strain MR-4).